Reading from the N-terminus, the 352-residue chain is 4-hydroxy-3-methylbut-2-en-1-yl diphosphate synthase (flavodoxin) (352 aa).

Residues C263, C266, C298, and E305 each coordinate [4Fe-4S] cluster.

Belongs to the IspG family. [4Fe-4S] cluster serves as cofactor.

It carries out the reaction (2E)-4-hydroxy-3-methylbut-2-enyl diphosphate + oxidized [flavodoxin] + H2O + 2 H(+) = 2-C-methyl-D-erythritol 2,4-cyclic diphosphate + reduced [flavodoxin]. Its pathway is isoprenoid biosynthesis; isopentenyl diphosphate biosynthesis via DXP pathway; isopentenyl diphosphate from 1-deoxy-D-xylulose 5-phosphate: step 5/6. Converts 2C-methyl-D-erythritol 2,4-cyclodiphosphate (ME-2,4cPP) into 1-hydroxy-2-methyl-2-(E)-butenyl 4-diphosphate. This is 4-hydroxy-3-methylbut-2-en-1-yl diphosphate synthase (flavodoxin) from Sulfurimonas denitrificans (strain ATCC 33889 / DSM 1251) (Thiomicrospira denitrificans (strain ATCC 33889 / DSM 1251)).